A 316-amino-acid polypeptide reads, in one-letter code: MARKKYALIGAGNIGGTLAHLAALKGLGDIVLFDVVEGVPQGKALDLSQCGPVEGFDANIKGSNDYADIAGADVIIVTAGVARKPGMSRDDLLGINLKVMKAVGEGIRDNAPDAFVICITNPLDAMVWALREFSGLPANKVVGMAGVLDSGRFSHFLAEEFGVSVNSVLGGHGDNMVPVLEYSTVSGIPVSELIEMGFSTKEKVDEIIKRTRGGGGEIVALLKTGSAYYAPATSGIAMAEAYLYDQKRILPAAAHLSGEYGIDNLYVGVPVVIGANGVEKVVEVKLSDEAKANLQVSVDAVKELLVACKGIDESLA.

34–39 (DVVEGV) contributes to the NAD(+) binding site. 3 residues coordinate substrate: arginine 89, asparagine 121, and arginine 152. Residue asparagine 121 participates in NAD(+) binding. The active-site Proton acceptor is histidine 172.

The protein belongs to the LDH/MDH superfamily. LDH family. As to quaternary structure, homotetramer.

It catalyses the reaction (S)-lactate + NAD(+) = pyruvate + NADH + H(+). The protein operates within fermentation; pyruvate fermentation to lactate; (S)-lactate from pyruvate: step 1/1. The polypeptide is L-lactate dehydrogenase (Botryococcus braunii (Green alga)).